Here is a 186-residue protein sequence, read N- to C-terminus: uncharacterized protein (186 aa).

This is an uncharacterized protein from Methanocaldococcus jannaschii (strain ATCC 43067 / DSM 2661 / JAL-1 / JCM 10045 / NBRC 100440) (Methanococcus jannaschii).